The chain runs to 1272 residues: Ubiquitin carboxyl-terminal hydrolase 2 (1272 aa).

Residues 736–1258 (TGINNIGNTC…TPYFLVYVKQ (523 aa)) enclose the USP domain. Cys-745 functions as the Nucleophile in the catalytic mechanism. Positions 884–918 (DGLNGDVGTDANRKKNESNDAEVSENEDTTGLTSP) are disordered. Over residues 902–911 (NDAEVSENED) the composition is skewed to acidic residues. Ser-907 is modified (phosphoserine). His-1209 acts as the Proton acceptor in catalysis.

This sequence belongs to the peptidase C19 family. Forms a ternary complex with RSP5 and RUP1. Interacts with RSP5. Interacts with FZO1.

The catalysed reaction is Thiol-dependent hydrolysis of ester, thioester, amide, peptide and isopeptide bonds formed by the C-terminal Gly of ubiquitin (a 76-residue protein attached to proteins as an intracellular targeting signal).. Has an ATP-independent isopeptidase activity, cleaving at the C-terminus of the ubiquitin moiety in natural or engineered linear fusion proteins, irrespective of their size or the presence of an N-terminal extension to ubiquitin. Hydrolyzes polyubiquitinated 'Lys-63' polyubiquitin chains in RPO21, producing mono-ubiquitinated RNA polymerase II. Removes ubiquitin chains that initiate proteolysis of FZO1 and inhibit mitochondrial fusion. The polypeptide is Ubiquitin carboxyl-terminal hydrolase 2 (UBP2) (Saccharomyces cerevisiae (strain ATCC 204508 / S288c) (Baker's yeast)).